A 57-amino-acid polypeptide reads, in one-letter code: Large ribosomal subunit protein bL32c (57 aa).

This sequence belongs to the bacterial ribosomal protein bL32 family.

The protein resides in the plastid. Its subcellular location is the chloroplast. The protein is Large ribosomal subunit protein bL32c of Liriodendron tulipifera (Tuliptree).